The following is a 102-amino-acid chain: Large ribosomal subunit protein uL24 (102 aa).

Belongs to the universal ribosomal protein uL24 family. As to quaternary structure, part of the 50S ribosomal subunit.

One of two assembly initiator proteins, it binds directly to the 5'-end of the 23S rRNA, where it nucleates assembly of the 50S subunit. Its function is as follows. One of the proteins that surrounds the polypeptide exit tunnel on the outside of the subunit. The chain is Large ribosomal subunit protein uL24 from Rhizobium etli (strain CIAT 652).